Consider the following 391-residue polypeptide: Phosphoglycerate kinase (391 aa).

Residues 21-23 (DLN), Arg-36, 59-62 (HLGR), Arg-113, and Arg-146 each bind substrate. ATP is bound by residues Lys-197, Glu-319, and 345–348 (GGDT).

This sequence belongs to the phosphoglycerate kinase family. Monomer.

The protein resides in the cytoplasm. It carries out the reaction (2R)-3-phosphoglycerate + ATP = (2R)-3-phospho-glyceroyl phosphate + ADP. It participates in carbohydrate degradation; glycolysis; pyruvate from D-glyceraldehyde 3-phosphate: step 2/5. The protein is Phosphoglycerate kinase of Xanthomonas euvesicatoria pv. vesicatoria (strain 85-10) (Xanthomonas campestris pv. vesicatoria).